The primary structure comprises 184 residues: Alpha-tubulin N-acetyltransferase (184 aa).

Positions 1 to 170 constitute an N-acetyltransferase domain; the sequence is METFNHIDIK…NHFVIFSNYF (170 aa). Residues 104 to 117 and 140 to 149 each bind acetyl-CoA; these read FYILEKFQKRGLGI and SYKLQNFLKK.

Belongs to the acetyltransferase ATAT1 family.

It carries out the reaction L-lysyl-[alpha-tubulin] + acetyl-CoA = N(6)-acetyl-L-lysyl-[alpha-tubulin] + CoA + H(+). Functionally, specifically acetylates 'Lys-40' in alpha-tubulin on the lumenal side of microtubules. Promotes microtubule destabilization and accelerates microtubule dynamics; this activity may be independent of acetylation activity. Acetylates alpha-tubulin with a slow enzymatic rate, due to a catalytic site that is not optimized for acetyl transfer. Enters the microtubule through each end and diffuses quickly throughout the lumen of microtubules. Acetylates only long/old microtubules because of its slow acetylation rate since it does not have time to act on dynamically unstable microtubules before the enzyme is released. This Plasmodium falciparum (isolate 3D7) protein is Alpha-tubulin N-acetyltransferase.